A 120-amino-acid polypeptide reads, in one-letter code: NADH-ubiquinone oxidoreductase chain 3 (120 aa).

A run of 3 helical transmembrane segments spans residues 6–26 (LLFF…LTWV), 63–83 (IVCV…PFFF), and 85–105 (FFLV…FVFY).

This sequence belongs to the complex I subunit 3 family.

The protein resides in the mitochondrion membrane. It carries out the reaction a ubiquinone + NADH + 5 H(+)(in) = a ubiquinol + NAD(+) + 4 H(+)(out). Functionally, core subunit of the mitochondrial membrane respiratory chain NADH dehydrogenase (Complex I) that is believed to belong to the minimal assembly required for catalysis. Complex I functions in the transfer of electrons from NADH to the respiratory chain. The immediate electron acceptor for the enzyme is believed to be ubiquinone. The chain is NADH-ubiquinone oxidoreductase chain 3 (ND3) from Paramecium tetraurelia.